The following is a 151-amino-acid chain: Transcriptional repressor NrdR (151 aa).

A zinc finger lies at 3–34 (CPYCGSLDNKVIDSRLSRDDTETRRRRECLEC). The ATP-cone domain occupies 49 to 139 (LMIVKKDGRR…VYREFKDVHD (91 aa)).

Belongs to the NrdR family. Zn(2+) is required as a cofactor.

In terms of biological role, negatively regulates transcription of bacterial ribonucleotide reductase nrd genes and operons by binding to NrdR-boxes. In Desulfosudis oleivorans (strain DSM 6200 / JCM 39069 / Hxd3) (Desulfococcus oleovorans), this protein is Transcriptional repressor NrdR.